The chain runs to 235 residues: 1-(5-phosphoribosyl)-5-[(5-phosphoribosylamino)methylideneamino] imidazole-4-carboxamide isomerase (235 aa).

Residue Asp8 is the Proton acceptor of the active site. The active-site Proton donor is the Asp127.

This sequence belongs to the HisA/HisF family.

Its subcellular location is the cytoplasm. The enzyme catalyses 1-(5-phospho-beta-D-ribosyl)-5-[(5-phospho-beta-D-ribosylamino)methylideneamino]imidazole-4-carboxamide = 5-[(5-phospho-1-deoxy-D-ribulos-1-ylimino)methylamino]-1-(5-phospho-beta-D-ribosyl)imidazole-4-carboxamide. Its pathway is amino-acid biosynthesis; L-histidine biosynthesis; L-histidine from 5-phospho-alpha-D-ribose 1-diphosphate: step 4/9. The chain is 1-(5-phosphoribosyl)-5-[(5-phosphoribosylamino)methylideneamino] imidazole-4-carboxamide isomerase from Nautilia profundicola (strain ATCC BAA-1463 / DSM 18972 / AmH).